A 104-amino-acid polypeptide reads, in one-letter code: Ycf49-like protein (104 aa).

3 helical membrane-spanning segments follow: residues 6–26 (IPTW…IALV), 41–61 (LAWG…WHFF), and 73–93 (LQAL…WWIY).

The protein belongs to the ycf49 family.

The protein resides in the cell membrane. The polypeptide is Ycf49-like protein (Synechocystis sp. (strain ATCC 27184 / PCC 6803 / Kazusa)).